The following is a 312-amino-acid chain: DNA-directed RNA polymerase subunit alpha (312 aa).

The alpha N-terminal domain (alpha-NTD) stretch occupies residues M1–S229. The interval E239–A312 is alpha C-terminal domain (alpha-CTD).

It belongs to the RNA polymerase alpha chain family. As to quaternary structure, in cyanobacteria the RNAP catalytic core is composed of 2 alpha, 1 beta, 1 beta', 1 gamma and 1 omega subunit. When a sigma factor is associated with the core the holoenzyme is formed, which can initiate transcription.

It carries out the reaction RNA(n) + a ribonucleoside 5'-triphosphate = RNA(n+1) + diphosphate. Its function is as follows. DNA-dependent RNA polymerase catalyzes the transcription of DNA into RNA using the four ribonucleoside triphosphates as substrates. The sequence is that of DNA-directed RNA polymerase subunit alpha from Prochlorococcus marinus (strain NATL1A).